Consider the following 107-residue polypeptide: High mobility group protein HMG-I/HMG-Y (107 aa).

The disordered stretch occupies residues 1–107 (MSESSSKSSQ…ISQESSEEEQ (107 aa)). S2 is subject to N-acetylserine. Residue K7 is modified to N6-acetyllysine. An ADP-ribosylserine modification is found at S8. S9 carries the ADP-ribosylserine; alternate modification. S9 bears the Phosphoserine; alternate mark. K15 carries the N6-acetyllysine; alternate modification. K15 is covalently cross-linked (Glycyl lysine isopeptide (Lys-Gly) (interchain with G-Cter in SUMO2); alternate). Over residues 15–24 (KQEKDGTEKR) the composition is skewed to basic and acidic residues. A DNA-binding region (a.T hook 1) is located at residues 21 to 31 (TEKRGRGRPRK). Residue R26 is modified to Asymmetric dimethylarginine; alternate. An Omega-N-methylarginine; alternate modification is found at R26. R26 bears the Symmetric dimethylarginine; alternate mark. S36 is subject to Phosphoserine; by HIPK2 and CDC2. Phosphothreonine occurs at positions 39 and 42. Phosphoserine is present on residues S44 and S49. The residue at position 53 (T53) is a Phosphothreonine; by HIPK2 and CDC2. The a.T hook 2 DNA-binding region spans 53 to 63 (TPKRPRGRPKG). An interaction with HIPK2 region spans residues 53 to 77 (TPKRPRGRPKGSKNKGAAKTRKTTT). The span at 55–74 (KRPRGRPKGSKNKGAAKTRK) shows a compositional bias: basic residues. Residues R58 and R60 each carry the asymmetric dimethylarginine; by PRMT6; alternate modification. An omega-N-methylarginine; by PRMT6; alternate mark is found at R58 and R60. K67 carries the phosphothreonine modification. A Phosphothreonine; by HIPK2 and CDC2 modification is found at T78. Residues 78–89 (TPGRKPRGRPKK) constitute a DNA-binding region (a.T hook 3). Over residues 93-107 (EEEEGISQESSEEEQ) the composition is skewed to acidic residues. S99 carries the post-translational modification Phosphoserine. Residues S102 and S103 each carry the phosphoserine; by CK modification.

This sequence belongs to the HMGA family. In terms of assembly, interacts with HIPK2. Post-translationally, constitutively phosphorylated on two or three sites. Hyperphosphorylated at early stages of apoptosis, followed by dephosphorylation and methylation, which coincides with chromatin condensation. Isoforms HMG-I and HMG-Y can be phosphorylated by HIPK2. Phosphorylation of HMG-I at Ser-36, Thr-53 and Thr-78 and of HMG-Y at Thr-42 and Thr-67 by HIPK2 modulates DNA-binding affinity. HMG-Y is not methylated. In terms of processing, methylation at Arg-58 is mutually exclusive with methylation at Arg-60.

The protein localises to the nucleus. It is found in the chromosome. Its function is as follows. HMG-I/Y bind preferentially to the minor groove of A+T rich regions in double-stranded DNA. It is suggested that these proteins could function in nucleosome phasing and in the 3'-end processing of mRNA transcripts. They are also involved in the transcription regulation of genes containing, or in close proximity to A+T-rich regions. This is High mobility group protein HMG-I/HMG-Y (HMGA1) from Homo sapiens (Human).